A 340-amino-acid polypeptide reads, in one-letter code: C5a anaphylatoxin chemotactic receptor 1 (340 aa).

The Extracellular portion of the chain corresponds to T1–D30. The tract at residues D3–D11 is required for CHIPS binding. Sulfotyrosine occurs at positions 4 and 7. The involved in C5a binding stretch occupies residues D14–S23. A helical membrane pass occupies residues I31–F57. The Cytoplasmic segment spans residues E58–T62. A helical membrane pass occupies residues I63–F86. At T87–R103 the chain is on the extracellular side. A disulfide bridge links C102 with C181. A helical transmembrane segment spans residues I104–A125. Residues D126–A146 lie on the Cytoplasmic side of the membrane. Residues W147–Y167 form a helical membrane-spanning segment. The Extracellular portion of the chain corresponds to R168–R193. A helical transmembrane segment spans residues A194 to L219. Residues L220–K235 lie on the Cytoplasmic side of the membrane. The helical transmembrane segment at V236–M258 threads the bilayer. Residues S259 to D275 are Extracellular-facing. A helical membrane pass occupies residues S276–A296. Residues G297–T340 are Cytoplasmic-facing. S307, S310, S320, S325, S327, and S331 each carry phosphoserine.

It belongs to the G-protein coupled receptor 1 family. Homodimer. May also form higher-order oligomers. Interacts (when phosphorylated) with ARRB1 and ARRB2; the interaction is associated with internalization of C5aR. Interacts (via N-terminal domain) with S.aureus chemotaxis inhibitory protein (CHIPS); the interaction blocks the receptor and may thus inhibit the immune response. Sulfation plays a critical role in the association of C5aR with C5a, but no significant role in the ability of the receptor to transduce a signal and mobilize calcium in response to a small peptide agonist. Sulfation at Tyr-7 is important for CHIPS binding. In terms of processing, phosphorylated on serine residues in response to C5a binding, resulting in internalization of the receptor and short-term desensitization to C5a.

Its subcellular location is the cell membrane. The protein localises to the cytoplasmic vesicle. Its function is as follows. Receptor for the chemotactic and inflammatory peptide anaphylatoxin C5a. The ligand interacts with at least two sites on the receptor: a high-affinity site on the extracellular N-terminus, and a second site in the transmembrane region which activates downstream signaling events. Receptor activation stimulates chemotaxis, granule enzyme release, intracellular calcium release and superoxide anion production. In Macaca mulatta (Rhesus macaque), this protein is C5a anaphylatoxin chemotactic receptor 1 (C5AR1).